Here is a 210-residue protein sequence, read N- to C-terminus: Transmembrane protein 61 (210 aa).

2 helical membrane-spanning segments follow: residues 18–38 and 69–89; these read YCMT…FAWW and VSFV…LWSV. The disordered stretch occupies residues 140–172; it reads VAEGPPTPPAYPTEEALEPSGSRDALLSTQPAW.

Its subcellular location is the membrane. In Homo sapiens (Human), this protein is Transmembrane protein 61 (TMEM61).